The sequence spans 105 residues: uncharacterized protein (105 aa).

This is an uncharacterized protein from Saccharomyces cerevisiae (strain ATCC 204508 / S288c) (Baker's yeast).